Here is a 266-residue protein sequence, read N- to C-terminus: 4-hydroxy-tetrahydrodipicolinate reductase (266 aa).

11 to 16 provides a ligand contact to NAD(+); it reads GALGKM. An NADP(+)-binding site is contributed by Lys39. Position 100 to 102 (100 to 102) interacts with NAD(+); the sequence is GTT. His156 functions as the Proton donor/acceptor in the catalytic mechanism. His157 contacts (S)-2,3,4,5-tetrahydrodipicolinate. Lys160 (proton donor) is an active-site residue. 166-167 is a binding site for (S)-2,3,4,5-tetrahydrodipicolinate; the sequence is GT.

It belongs to the DapB family.

The protein localises to the cytoplasm. The catalysed reaction is (S)-2,3,4,5-tetrahydrodipicolinate + NAD(+) + H2O = (2S,4S)-4-hydroxy-2,3,4,5-tetrahydrodipicolinate + NADH + H(+). It carries out the reaction (S)-2,3,4,5-tetrahydrodipicolinate + NADP(+) + H2O = (2S,4S)-4-hydroxy-2,3,4,5-tetrahydrodipicolinate + NADPH + H(+). It functions in the pathway amino-acid biosynthesis; L-lysine biosynthesis via DAP pathway; (S)-tetrahydrodipicolinate from L-aspartate: step 4/4. Its function is as follows. Catalyzes the conversion of 4-hydroxy-tetrahydrodipicolinate (HTPA) to tetrahydrodipicolinate. The sequence is that of 4-hydroxy-tetrahydrodipicolinate reductase from Syntrophomonas wolfei subsp. wolfei (strain DSM 2245B / Goettingen).